Reading from the N-terminus, the 492-residue chain is uncharacterized protein (492 aa).

A signal peptide spans 1–22; sequence MIRPNMFALLMLVVLAITSVNA. N-linked (GlcNAc...) asparagine; by host glycans are attached at residues asparagine 92, asparagine 97, asparagine 119, asparagine 146, asparagine 213, asparagine 267, and asparagine 458.

Its subcellular location is the secreted. This is an uncharacterized protein from Acanthamoeba polyphaga (Amoeba).